The sequence spans 314 residues: 4-hydroxy-3-methylbut-2-enyl diphosphate reductase (314 aa).

Cys-12 contributes to the [4Fe-4S] cluster binding site. His-41 and His-74 together coordinate (2E)-4-hydroxy-3-methylbut-2-enyl diphosphate. Dimethylallyl diphosphate-binding residues include His-41 and His-74. Isopentenyl diphosphate is bound by residues His-41 and His-74. Residue Cys-96 participates in [4Fe-4S] cluster binding. His-124 is a binding site for (2E)-4-hydroxy-3-methylbut-2-enyl diphosphate. His-124 is a binding site for dimethylallyl diphosphate. His-124 contacts isopentenyl diphosphate. Residue Glu-126 is the Proton donor of the active site. Position 167 (Thr-167) interacts with (2E)-4-hydroxy-3-methylbut-2-enyl diphosphate. Cys-197 contacts [4Fe-4S] cluster. (2E)-4-hydroxy-3-methylbut-2-enyl diphosphate-binding residues include Ser-225, Ser-226, Asn-227, and Ser-269. Residues Ser-225, Ser-226, Asn-227, and Ser-269 each coordinate dimethylallyl diphosphate. Isopentenyl diphosphate contacts are provided by Ser-225, Ser-226, Asn-227, and Ser-269.

Belongs to the IspH family. [4Fe-4S] cluster is required as a cofactor.

The catalysed reaction is isopentenyl diphosphate + 2 oxidized [2Fe-2S]-[ferredoxin] + H2O = (2E)-4-hydroxy-3-methylbut-2-enyl diphosphate + 2 reduced [2Fe-2S]-[ferredoxin] + 2 H(+). The enzyme catalyses dimethylallyl diphosphate + 2 oxidized [2Fe-2S]-[ferredoxin] + H2O = (2E)-4-hydroxy-3-methylbut-2-enyl diphosphate + 2 reduced [2Fe-2S]-[ferredoxin] + 2 H(+). It participates in isoprenoid biosynthesis; dimethylallyl diphosphate biosynthesis; dimethylallyl diphosphate from (2E)-4-hydroxy-3-methylbutenyl diphosphate: step 1/1. The protein operates within isoprenoid biosynthesis; isopentenyl diphosphate biosynthesis via DXP pathway; isopentenyl diphosphate from 1-deoxy-D-xylulose 5-phosphate: step 6/6. Catalyzes the conversion of 1-hydroxy-2-methyl-2-(E)-butenyl 4-diphosphate (HMBPP) into a mixture of isopentenyl diphosphate (IPP) and dimethylallyl diphosphate (DMAPP). Acts in the terminal step of the DOXP/MEP pathway for isoprenoid precursor biosynthesis. The protein is 4-hydroxy-3-methylbut-2-enyl diphosphate reductase of Mannheimia succiniciproducens (strain KCTC 0769BP / MBEL55E).